The following is a 290-amino-acid chain: 4-diphosphocytidyl-2-C-methyl-D-erythritol kinase (290 aa).

K13 is an active-site residue. Position 96–106 (96–106) interacts with ATP; sequence PMGGGIGGGSS. Residue D138 is part of the active site.

It belongs to the GHMP kinase family. IspE subfamily.

The enzyme catalyses 4-CDP-2-C-methyl-D-erythritol + ATP = 4-CDP-2-C-methyl-D-erythritol 2-phosphate + ADP + H(+). It participates in isoprenoid biosynthesis; isopentenyl diphosphate biosynthesis via DXP pathway; isopentenyl diphosphate from 1-deoxy-D-xylulose 5-phosphate: step 3/6. Functionally, catalyzes the phosphorylation of the position 2 hydroxy group of 4-diphosphocytidyl-2C-methyl-D-erythritol. This is 4-diphosphocytidyl-2-C-methyl-D-erythritol kinase from Vibrio campbellii (strain ATCC BAA-1116).